Reading from the N-terminus, the 292-residue chain is Protoheme IX farnesyltransferase (292 aa).

The next 9 helical transmembrane spans lie at 11–31, 37–57, 85–105, 108–128, 133–153, 163–183, 199–219, 223–243, and 261–281; these read FGIV…GFQI, WKIF…SLAL, AAAG…LFKL, VAGW…TLWW, VFAA…GYAV, SLYL…VLAI, VALG…VYVG, AAPM…PFVF, and WLAF…IPVI.

This sequence belongs to the UbiA prenyltransferase family. Protoheme IX farnesyltransferase subfamily.

The protein resides in the cell inner membrane. The enzyme catalyses heme b + (2E,6E)-farnesyl diphosphate + H2O = Fe(II)-heme o + diphosphate. It functions in the pathway porphyrin-containing compound metabolism; heme O biosynthesis; heme O from protoheme: step 1/1. Converts heme B (protoheme IX) to heme O by substitution of the vinyl group on carbon 2 of heme B porphyrin ring with a hydroxyethyl farnesyl side group. This Bdellovibrio bacteriovorus (strain ATCC 15356 / DSM 50701 / NCIMB 9529 / HD100) protein is Protoheme IX farnesyltransferase.